A 162-amino-acid polypeptide reads, in one-letter code: Transcription antitermination protein NusB (162 aa).

It belongs to the NusB family.

Involved in transcription antitermination. Required for transcription of ribosomal RNA (rRNA) genes. Binds specifically to the boxA antiterminator sequence of the ribosomal RNA (rrn) operons. This Xanthomonas euvesicatoria pv. vesicatoria (strain 85-10) (Xanthomonas campestris pv. vesicatoria) protein is Transcription antitermination protein NusB.